A 244-amino-acid polypeptide reads, in one-letter code: Large ribosomal subunit protein uL30 (244 aa).

Positions 1-37 (MAPTKKVPQVPETVLKRRKQRADARTKAAQHKVTVAA) are disordered.

This sequence belongs to the universal ribosomal protein uL30 family.

Binds to G-rich structures in 28S rRNA and in mRNAs. Plays a regulatory role in the translation apparatus; inhibits cell-free translation of mRNAs. The protein is Large ribosomal subunit protein uL30 (rpl-7) of Caenorhabditis elegans.